The primary structure comprises 1013 residues: MAEPGHSHHLSARVRGRTERRIPRLWRLLLWAGTAFQVTQGTGPELHACKESEYHYEYTACDSTGSRWRVAVPHTPGLCTSLPDPIKGTECSFSCNAGEFLDMKDQSCKPCAEGRYSLGTGIRFDEWDELPHGFASLSANMELDDSAAESTGNCTSSKWVPRGDYIASNTDECTATLMYAVNLKQSGTVNFEYYYPDSSIIFEFFVQNDQCQPNADDSRWMKTTEKGWEFHSVELNRGNNVLYWRTTAFSVWTKVPKPVLVRNIAITGVAYTSECFPCKPGTYADKQGSSFCKLCPANSYSNKGETSCHQCDPDKYSEKGSSSCNVRPACTDKDYFYTHTACDANGETQLMYKWAKPKICSEDLEGAVKLPASGVKTHCPPCNPGFFKTNNSTCQPCPYGSYSNGSDCTRCPAGTEPAVGFEYKWWNTLPTNMETTVLSGINFEYKGMTGWEVAGDHIYTAAGASDNDFMILTLVVPGFRPPQSVMADTENKEVARITFVFETLCSVNCELYFMVGVNSRTNTPVETWKGSKGKQSYTYIIEENTTTSFTWAFQRTTFHEASRKYTNDVAKIYSINVTNVMNGVASYCRPCALEASDVGSSCTSCPAGYYIDRDSGTCHSCPTNTILKAHQPYGVQACVPCGPGTKNNKIHSLCYNDCTFSRNTPTRTFNYNFSALANTVTLAGGPSFTSKGLKYFHHFTLSLCGNQGRKMSVCTDNVTDLRIPEGESGFSKSITAYVCQAVIIPPEVTGYKAGVSSQPVSLADRLIGVTTDMTLDGITSPAELFHLESLGIPDVIFFYRSNDVTQSCSSGRSTTIRVRCSPQKTVPGSLLLPGTCSDGTCDGCNFHFLWESAAACPLCSVADYHAIVSSCVAGIQKTTYVWREPKLCSGGISLPEQRVTICKTIDFWLKVGISAGTCTAILLTVLTCYFWKKNQKLEYKYSKLVMNATLKDCDLPAADSCAIMEGEDVEDDLIFTSKKSLFGKIKSFTSKRTPDGFDSVPLKTSSGGLDMDL.

Residues 1–41 (MAEPGHSHHLSARVRGRTERRIPRLWRLLLWAGTAFQVTQG) form the signal peptide. Over 42 to 910 (TGPELHACKE…ICKTIDFWLK (869 aa)) the chain is Extracellular. Asn153 is a glycosylation site (N-linked (GlcNAc...) asparagine). Intrachain disulfides connect Cys278/Cys295, Cys308/Cys330, and Cys311/Cys342. N-linked (GlcNAc...) asparagine glycans are attached at residues Asn404 and Asn672. The 203-residue stretch at 656-858 (NDCTFSRNTP…LWESAAACPL (203 aa)) folds into the MRH domain. 4 disulfide bridges follow: Cys658-Cys704, Cys714-Cys739, Cys808-Cys844, and Cys820-Cys856. The helical transmembrane segment at 911–931 (VGISAGTCTAILLTVLTCYFW) threads the bilayer. Over 932–1013 (KKNQKLEYKY…TSSGGLDMDL (82 aa)) the chain is Cytoplasmic.

This sequence belongs to the ELAPOR family. As to quaternary structure, interacts with HSPA5; may regulate the function of HSPA5 in apoptosis and cell proliferation. Expressed in normal endometrium but overexpressed in endometroid tumors.

Its subcellular location is the cell membrane. The protein localises to the late endosome membrane. It is found in the golgi apparatus. It localises to the trans-Golgi network membrane. The protein resides in the lysosome membrane. Its subcellular location is the endoplasmic reticulum membrane. Its function is as follows. May protect cells from cell death by inducing cytosolic vacuolization and up-regulating the autophagy pathway. May play a role in apoptosis and cell proliferation through its interaction with HSPA5. The protein is Endosome/lysosome-associated apoptosis and autophagy regulator 1 of Homo sapiens (Human).